The chain runs to 63 residues: MLGQSIRRFTTSVVRRSHYEEGPGKNLPFSVENKWSLLAKMCLYFGSAFATPFLVVRHQLLKT.

The N-terminal 16 residues, 1–16, are a transit peptide targeting the mitochondrion; it reads MLGQSIRRFTTSVVRR. Residues 17 to 33 lie on the Mitochondrial matrix side of the membrane; sequence SHYEEGPGKNLPFSVEN. At Lys25 the chain carries N6-acetyllysine; alternate. N6-succinyllysine; alternate is present on Lys25. Residues 34–60 form a helical membrane-spanning segment; it reads KWSLLAKMCLYFGSAFATPFLVVRHQL. The Mitochondrial intermembrane portion of the chain corresponds to 61–63; sequence LKT.

The protein belongs to the cytochrome c oxidase VIIc family. As to quaternary structure, component of the cytochrome c oxidase (complex IV, CIV), a multisubunit enzyme composed of 14 subunits. The complex is composed of a catalytic core of 3 subunits MT-CO1, MT-CO2 and MT-CO3, encoded in the mitochondrial DNA, and 11 supernumerary subunits COX4I1 (or COX4I2), COX5A, COX5B, COX6A1 (or COX6A2), COX6B1 (or COX6B2), COX6C, COX7A2 (or COX7A1), COX7B, COX7C, COX8A and NDUFA4, which are encoded in the nuclear genome. The complex exists as a monomer or a dimer and forms supercomplexes (SCs) in the inner mitochondrial membrane with NADH-ubiquinone oxidoreductase (complex I, CI) and ubiquinol-cytochrome c oxidoreductase (cytochrome b-c1 complex, complex III, CIII), resulting in different assemblies (supercomplex SCI(1)III(2)IV(1) and megacomplex MCI(2)III(2)IV(2)). Interacts with RAB5IF.

Its subcellular location is the mitochondrion inner membrane. Its pathway is energy metabolism; oxidative phosphorylation. Functionally, component of the cytochrome c oxidase, the last enzyme in the mitochondrial electron transport chain which drives oxidative phosphorylation. The respiratory chain contains 3 multisubunit complexes succinate dehydrogenase (complex II, CII), ubiquinol-cytochrome c oxidoreductase (cytochrome b-c1 complex, complex III, CIII) and cytochrome c oxidase (complex IV, CIV), that cooperate to transfer electrons derived from NADH and succinate to molecular oxygen, creating an electrochemical gradient over the inner membrane that drives transmembrane transport and the ATP synthase. Cytochrome c oxidase is the component of the respiratory chain that catalyzes the reduction of oxygen to water. Electrons originating from reduced cytochrome c in the intermembrane space (IMS) are transferred via the dinuclear copper A center (CU(A)) of subunit 2 and heme A of subunit 1 to the active site in subunit 1, a binuclear center (BNC) formed by heme A3 and copper B (CU(B)). The BNC reduces molecular oxygen to 2 water molecules using 4 electrons from cytochrome c in the IMS and 4 protons from the mitochondrial matrix. This is Cytochrome c oxidase subunit 7C, mitochondrial (COX7C) from Homo sapiens (Human).